The following is a 437-amino-acid chain: Serine--tRNA ligase (437 aa).

Residue 240 to 242 coordinates L-serine; sequence TAE. 271–273 provides a ligand contact to ATP; that stretch reads RAE. Glu294 contacts L-serine. 358–361 lines the ATP pocket; it reads EISS. Ser394 is an L-serine binding site.

The protein belongs to the class-II aminoacyl-tRNA synthetase family. Type-1 seryl-tRNA synthetase subfamily. Homodimer. The tRNA molecule binds across the dimer.

It localises to the cytoplasm. It catalyses the reaction tRNA(Ser) + L-serine + ATP = L-seryl-tRNA(Ser) + AMP + diphosphate + H(+). The catalysed reaction is tRNA(Sec) + L-serine + ATP = L-seryl-tRNA(Sec) + AMP + diphosphate + H(+). Its pathway is aminoacyl-tRNA biosynthesis; selenocysteinyl-tRNA(Sec) biosynthesis; L-seryl-tRNA(Sec) from L-serine and tRNA(Sec): step 1/1. Its function is as follows. Catalyzes the attachment of serine to tRNA(Ser). Is also able to aminoacylate tRNA(Sec) with serine, to form the misacylated tRNA L-seryl-tRNA(Sec), which will be further converted into selenocysteinyl-tRNA(Sec). In Methylobacterium nodulans (strain LMG 21967 / CNCM I-2342 / ORS 2060), this protein is Serine--tRNA ligase.